Reading from the N-terminus, the 338-residue chain is Phosphoribosylformylglycinamidine cyclo-ligase (338 aa).

Belongs to the AIR synthase family.

It localises to the cytoplasm. The catalysed reaction is 2-formamido-N(1)-(5-O-phospho-beta-D-ribosyl)acetamidine + ATP = 5-amino-1-(5-phospho-beta-D-ribosyl)imidazole + ADP + phosphate + H(+). It participates in purine metabolism; IMP biosynthesis via de novo pathway; 5-amino-1-(5-phospho-D-ribosyl)imidazole from N(2)-formyl-N(1)-(5-phospho-D-ribosyl)glycinamide: step 2/2. The sequence is that of Phosphoribosylformylglycinamidine cyclo-ligase from Lactococcus lactis subsp. lactis (strain IL1403) (Streptococcus lactis).